Consider the following 193-residue polypeptide: Cysteine and glycine-rich protein 1 (193 aa).

The region spanning Cys-10–Cys-61 is the LIM zinc-binding 1 domain. Positions Lys-64–Lys-69 match the Nuclear localization signal motif. Ser-81 carries the post-translational modification Phosphoserine. An N6-acetyllysine modification is found at Lys-84. Lys-91 participates in a covalent cross-link: Glycyl lysine isopeptide (Lys-Gly) (interchain with G-Cter in SUMO2). N6-acetyllysine is present on residues Lys-112, Lys-131, Lys-137, and Lys-161. Residues Cys-119–Cys-170 form the LIM zinc-binding 2 domain. Phosphoserine is present on Ser-192.

As to quaternary structure, interacts with ASCC1; ASCC2 and TRIP4.

It is found in the nucleus. In terms of biological role, could play a role in neuronal development. The sequence is that of Cysteine and glycine-rich protein 1 (Csrp1) from Mus musculus (Mouse).